Consider the following 461-residue polypeptide: Argininosuccinate lyase (461 aa).

It belongs to the lyase 1 family. Argininosuccinate lyase subfamily.

It localises to the cytoplasm. It carries out the reaction 2-(N(omega)-L-arginino)succinate = fumarate + L-arginine. The protein operates within amino-acid biosynthesis; L-arginine biosynthesis; L-arginine from L-ornithine and carbamoyl phosphate: step 3/3. The protein is Argininosuccinate lyase of Dehalococcoides mccartyi (strain ATCC BAA-2100 / JCM 16839 / KCTC 5957 / BAV1).